Consider the following 86-residue polypeptide: Small ribosomal subunit protein uS17 (86 aa).

The protein belongs to the universal ribosomal protein uS17 family. Part of the 30S ribosomal subunit.

Functionally, one of the primary rRNA binding proteins, it binds specifically to the 5'-end of 16S ribosomal RNA. In Streptococcus equi subsp. equi (strain 4047), this protein is Small ribosomal subunit protein uS17.